The chain runs to 298 residues: Porphobilinogen deaminase (298 aa).

Position 239 is an S-(dipyrrolylmethanemethyl)cysteine (C239).

The protein belongs to the HMBS family. In terms of assembly, monomer. It depends on dipyrromethane as a cofactor.

The enzyme catalyses 4 porphobilinogen + H2O = hydroxymethylbilane + 4 NH4(+). It participates in porphyrin-containing compound metabolism; protoporphyrin-IX biosynthesis; coproporphyrinogen-III from 5-aminolevulinate: step 2/4. Its function is as follows. Tetrapolymerization of the monopyrrole PBG into the hydroxymethylbilane pre-uroporphyrinogen in several discrete steps. The chain is Porphobilinogen deaminase from Orientia tsutsugamushi (strain Boryong) (Rickettsia tsutsugamushi).